The chain runs to 220 residues: Large ribosomal subunit protein bL25 (220 aa).

A compositionally biased stretch (acidic residues) spans 186 to 199 (ELEDEDEDEDEVAA). A disordered region spans residues 186-220 (ELEDEDEDEDEVAADEVPATEVDDQAAVKEGEGKE). Basic and acidic residues predominate over residues 211 to 220 (AAVKEGEGKE).

The protein belongs to the bacterial ribosomal protein bL25 family. CTC subfamily. In terms of assembly, part of the 50S ribosomal subunit; part of the 5S rRNA/L5/L18/L25 subcomplex. Contacts the 5S rRNA. Binds to the 5S rRNA independently of L5 and L18.

Its function is as follows. This is one of the proteins that binds to the 5S RNA in the ribosome where it forms part of the central protuberance. This chain is Large ribosomal subunit protein bL25, found in Christiangramia forsetii (strain DSM 17595 / CGMCC 1.15422 / KT0803) (Gramella forsetii).